The sequence spans 465 residues: MKVYNTLTNKKEEFLTLVPGEVKMYVCGPTVYNFFHIGNARTFVVFDTIRRYLEYRGYKVKFIQNFTDIDDKMIKRANEEGSTVKELGDRFIKEYYKDADDLNIERATKNPRATEFMEEIIKFVSDLIEKGYAYEIDGDVYFSTKKFNSYGKLSGQNLEELQLGARINVDERKKDPMDFAIWKSQKPGEPAWESPWGMGRPGWHIECSCMAYNLLGETIDIHAGGSDLSFPHHENEIAQSEARTGKQFAKYWLHSAFVNVNNQKMSKSLNNFFTAREILEKYDADVLRMFMLSGHYRTQINFSMELLDSTKAALDRLYNSINNLENLLDEVKNEELRDEELEYKNELQKYKEKYIEKMDDDFNTADAISVIFDLIRDVNTNVTIESSKELVKYTLDLIRELGNPLGILQESTKASLEEEIEKLIEERQKARKEKNWALADKIRDNLKERGIVLEDTPQGVRWKQI.

Cys27 lines the Zn(2+) pocket. Positions 29 to 39 match the 'HIGH' region motif; that stretch reads PTVYNFFHIGN. Zn(2+) is bound by residues Cys207, His232, and Glu236. The short motif at 264–268 is the 'KMSKS' region element; the sequence is KMSKS. Lys267 is a binding site for ATP.

It belongs to the class-I aminoacyl-tRNA synthetase family. In terms of assembly, monomer. Zn(2+) serves as cofactor.

It localises to the cytoplasm. The catalysed reaction is tRNA(Cys) + L-cysteine + ATP = L-cysteinyl-tRNA(Cys) + AMP + diphosphate. This is Cysteine--tRNA ligase from Clostridium botulinum (strain Okra / Type B1).